Reading from the N-terminus, the 502-residue chain is ATP synthase subunit alpha (502 aa).

The interval 115 to 138 (VDGLGPIETTETRPIESPAPGVMD) is disordered. Residue 169-176 (GDRQTGKT) coordinates ATP.

This sequence belongs to the ATPase alpha/beta chains family. In terms of assembly, F-type ATPases have 2 components, CF(1) - the catalytic core - and CF(0) - the membrane proton channel. CF(1) has five subunits: alpha(3), beta(3), gamma(1), delta(1), epsilon(1). CF(0) has three main subunits: a(1), b(2) and c(9-12). The alpha and beta chains form an alternating ring which encloses part of the gamma chain. CF(1) is attached to CF(0) by a central stalk formed by the gamma and epsilon chains, while a peripheral stalk is formed by the delta and b chains.

Its subcellular location is the cell membrane. The catalysed reaction is ATP + H2O + 4 H(+)(in) = ADP + phosphate + 5 H(+)(out). In terms of biological role, produces ATP from ADP in the presence of a proton gradient across the membrane. The alpha chain is a regulatory subunit. The chain is ATP synthase subunit alpha from Geobacillus sp. (strain WCH70).